The sequence spans 662 residues: ATP-dependent RNA helicase DDX3X (662 aa).

Position 2 is an N-acetylserine (S2). Residues 2–139 (SHVAVENALG…KSDEDDWSKP (138 aa)) form a required for TBK1 and IKBKE-dependent IFNB1 activation region. A Nuclear export signal motif is present at residues 12-21 (LDQQFAGLDL). Residues 19 to 144 (LDLNSSDNQS…DWSKPLPPSE (126 aa)) form a disordered region. Over residues 21–34 (LNSSDNQSGGSTAS) the composition is skewed to polar residues. Positions 38–44 (YIPPHLR) are interaction with EIF4E. Basic and acidic residues predominate over residues 44-68 (RNREATKGFYDKDSSGWSSSKDKDA). An N6-acetyllysine modification is found at K55. A phosphoserine mark is found at S82 and S90. Positions 94–130 (GRFDDRGRGDYDGIGGRGDRSGFGKFERGGNSRWCDK) are enriched in basic and acidic residues. Residues 100 to 110 (GRGDYDGIGGR) form an interaction with IKBKE region. Positions 100–662 (GRGDYDGIGG…NSQGVDWWGN (563 aa)) are interaction with GSK3B. Position 101 is an omega-N-methylarginine (R101). Y104 carries the phosphotyrosine modification. R110 is subject to Omega-N-methylarginine. K118 carries the post-translational modification N6-acetyllysine. The residue at position 131 (S131) is a Phosphoserine. The interaction with CHUK stretch occupies residues 139–172 (PLPPSERLEQELFSGGNTGINFEKYDDIPVEATG). The Q motif signature appears at 180–208 (ESFSDVEMGEIIMGNIELTRYTRPTPVQK). Residue S183 is modified to Phosphoserine. 200–207 (YTRPTPVQ) is a binding site for ATP. The 193-residue stretch at 211-403 (IPIIKEKRDL…RDFLDEYIFL (193 aa)) folds into the Helicase ATP-binding domain. K215 participates in a covalent cross-link: Glycyl lysine isopeptide (Lys-Gly) (interchain with G-Cter in SUMO2). 224–231 (AQTGSGKT) lines the ATP pocket. Residues 250-259 (ALRAMKENGR) are involved in stimulation of ATPase activity by DNA and RNA, nucleic acid binding and unwinding. The short motif at 347-350 (DEAD) is the DEAD box element. The 162-residue stretch at 414 to 575 (NITQKVVWVE…EVPSWLENMA (162 aa)) folds into the Helicase C-terminal domain. S456 carries the phosphoserine modification. Positions 536–661 (GNLGLATSFF…YNSQGVDWWG (126 aa)) are interaction with NXF1. R592 is subject to Omega-N-methylarginine. Phosphoserine is present on residues S594, S605, and S612. A disordered region spans residues 601-633 (DYRQSSGASSSSFSSSRASSSRSGGGGHGGSRG). Low complexity predominate over residues 604–622 (QSSGASSSSFSSSRASSSR). 2 positions are modified to omega-N-methylarginine: R617 and R632. Residues 623 to 633 (SGGGGHGGSRG) are compositionally biased toward gly residues.

Belongs to the DEAD box helicase family. DDX3/DED1 subfamily. As to quaternary structure, homodimer; can bind RNA as a monomer and as a dimer/oligomer. Interacts with TDRD3. When phosphorylated, interacts with IRF3; the interaction facilitates the phosphorylation and activation of IRF3 by IKBKE. Directly interacts with XPO1/CRM1. The interaction with XPO1/CMR1 is dependent on the DDX3X nuclear export signal motif and XPO1 interaction with GTPase RAN in its active GTP-bound form. Weakly interacts with TBKBP1/SINTBAD. Directly interacts with TRAF3; this interaction stimulates TRAF3 'Lys-63' ubiquitination. Interacts with CSNK1E in a Wnt-dependent manner; this interaction greatly enhances CSNK1E affinity for ATP, stimulates its kinase activity and promotes CSNK1E-mediated DVL2 phosphorylation. In the presence of RNA, the interaction is decreased. Also interacts with CSNK1D and stimulates its kinase activity. Interacts with TRPV4; this interaction is decreased when the TRPV4 channel is activated, leading to DDX3X relocalization to the nucleus. Interacts with MAP3K14/NIK. Directly interacts with CHUK/IKKA after physiological activation of the TLR7 and TLR8 pathways; this interaction enhances CHUK autophosphorylation. May associate with EIF4F complex, composed of at least EIF4A, EIF4E and EIF4G1/EIF4G3. Directly interacts with EIF4E in an RNA-independent manner; this interaction enhances EIF4E cap-binding ability. Directly interacts with EIF4G1 in an RNA-independent manner. DDX3X competes with EIF4G1 for interaction with EIF4E. Interacts with EIF4A1 and EIF2S1 in an RNA-independent manner. Associates with the eukaryotic translation initiation factor 3 (eIF-3) complex, including with EIF3B and EIF3C subunits. Directly interacts with IKBKE/IKKE; this interaction stimulates IKBKE activating autophosphorylation and is induced upon viral infection. Interacts with TBK1. Interacts with SP1; this interaction potentiates SP1-induced CDKN1A/WAF1/CIP1 transcription. Interacts with GSK3A and GSK3B. Interacts with several death receptors, inclusing FAS, TNFRSF10A and TNFRSF10B. Recruited to TNFRSF10B in the absence of receptor stimulation. When TNFRSF10B is stimulated, further recruited to the receptor and cleaved by caspases. A large proteolytic fragment remains associated with TNFRSF10B. Interacts (via C-terminus) with NXF1/TAP; this interaction may be partly involved in DDX3X nuclear export and in NXF1 localization to stress granules. Identified in an mRNP complex, composed of at least DHX9, DDX3X, ELAVL1, HNRNPU, IGF2BP1/2, ILF3, PABPC1, PCBP2, PTBP2, STAU1, STAU2, SYNCRIP and YBX1. The interaction with IGF2BP1/2 is RNA-dependent. Directly interacts with PABPC1/PABP1 in an RNA-independent manner. This interaction increases in stressed cells and decreases during cell recovery. Interacts (via C-terminus) with MAVS/IPS-1; this interaction potentiates MAVS-mediated IFNB induction. Interacts with ERCC6/CBS. Interacts with DHX33 in an RNA-independent manner. Interacts with DDX5 in the cytoplasm; this interaction may be more efficient when both proteins are unphosphorylated. Interacts with RIGI. Interacts with IFIH1/MDA5. Interacts with NCAPH; this interaction may be important for the NCAPH localization at condensing chromosomes during mitosis. Interacts with NLRP3 (via NACHT domain) under inflammasome-activating conditions. Interacts with CAPRIN1. Interacts with HNF4A and NR0B2/SHP in an RNA-independent manner; this interaction disrupts the interaction between HNF4 and NR0B2 that forms inactive heterodimers and enhances the formation of active HNF4 homodimers. Interacts with CREBBP/CBP. Interacts with EP300/p300. Interacts with gamma-tubulin. Interacts with phosphorylated TP53. Directly interacts with RELA/p65; this interaction may trap RELA in the cytoplasm, impairing nuclear relocalization upon TNF activating signals. In terms of processing, phosphorylated by TBK1; the phosphorylation is required for the synergistic induction of IFNB mediated by TBK1 and DDX3X. Phosphorylated by IKBKE. Also phosphorylated by CSNK1E; this phosphorylation may inhibit RNA-stimulated ATPase activity. Post-translationally, upon stimulation of death receptors, including TNFRSF10B, recruited to receptors and cleaved by caspases. Proteolytic fragments remain associated with the receptors. This cleavage presumably inactivates DDX3X anti-apoptotic function. Ubiquitinated by RNF39 via 'Lys-48'-linked ubiquitination; leading to proteasomal degradation. Expressed in ovary, including in germinal vesicle immature and metaphase II (MII) stage oocytes (at protein level). In the brain, expressed in the granule cells of the cerebellum and dentate gyrus, the pyramidal cells of the hippocampus, the ependymal cells lining the ventricles, choroid plexi and olfactory bulb. Also accumulates in the thalamic nuclei, the dorsal region of the colliculi and the pontine nucleus.

The protein localises to the cell membrane. Its subcellular location is the nucleus. It is found in the cytoplasm. It localises to the stress granule. The protein resides in the inflammasome. The protein localises to the cell projection. Its subcellular location is the lamellipodium. It catalyses the reaction ATP + H2O = ADP + phosphate + H(+). Its function is as follows. Multifunctional ATP-dependent RNA helicase. The ATPase activity can be stimulated by various ribo-and deoxynucleic acids indicative for a relaxed substrate specificity. In vitro can unwind partially double-stranded DNA with a preference for 5'-single-stranded DNA overhangs. Binds RNA G-quadruplex (rG4s) structures, including those located in the 5'-UTR of NRAS mRNA. Involved in many cellular processes, which do not necessarily require its ATPase/helicase catalytic activities. Involved in transcription regulation. Positively regulates CDKN1A/WAF1/CIP1 transcription in an SP1-dependent manner, hence inhibits cell growth. This function requires its ATPase, but not helicase activity. CDKN1A up-regulation may be cell-type specific. Binds CDH1/E-cadherin promoter and represses its transcription. Potentiates HNF4A-mediated MTTP transcriptional activation; this function requires ATPase, but not helicase activity. Facilitates HNF4A acetylation, possibly catalyzed by CREBBP/EP300, thereby increasing the DNA-binding affinity of HNF4 to its response element. In addition, disrupts the interaction between HNF4 and SHP that forms inactive heterodimers and enhances the formation of active HNF4 homodimers. By promoting HNF4A-induced MTTP expression, may play a role in lipid homeostasis. May positively regulate TP53 transcription. Associates with mRNPs, predominantly with spliced mRNAs carrying an exon junction complex (EJC). Involved in the regulation of translation initiation. Not involved in the general process of translation, but promotes efficient translation of selected complex mRNAs, containing highly structured 5'-untranslated regions (UTR). This function depends on helicase activity. Might facilitate translation by resolving secondary structures of 5'-UTRs during ribosome scanning. Alternatively, may act prior to 43S ribosomal scanning and promote 43S pre-initiation complex entry to mRNAs exhibiting specific RNA motifs, by performing local remodeling of transcript structures located close to the cap moiety. Independently of its ATPase activity, promotes the assembly of functional 80S ribosomes and disassembles from ribosomes prior to the translation elongation process. Positively regulates the translation of cyclin E1/CCNE1 mRNA and consequently promotes G1/S-phase transition during the cell cycle. May activate TP53 translation. Required for endoplasmic reticulum stress-induced ATF4 mRNA translation. Independently of its ATPase/helicase activity, enhances IRES-mediated translation; this activity requires interaction with EIF4E. Independently of its ATPase/helicase activity, has also been shown specifically repress cap-dependent translation, possibly by acting on translation initiation factor EIF4E. Involved in innate immunity, acting as a viral RNA sensor. Binds viral RNAs and promotes the production of type I interferon (IFN-alpha and IFN-beta). Potentiate MAVS/RIGI-mediated induction of IFNB in early stages of infection. Enhances IFNB1 expression via IRF3/IRF7 pathway and participates in NFKB activation in the presence of MAVS and TBK1. Involved in TBK1 and IKBKE-dependent IRF3 activation leading to IFNB induction, acts as a scaffolding adapter that links IKBKE and IRF3 and coordinates their activation. Involved in the TLR7/TLR8 signaling pathway leading to type I interferon induction, including IFNA4 production. In this context, acts as an upstream regulator of IRF7 activation by MAP3K14/NIK and CHUK/IKKA. Stimulates CHUK autophosphorylation and activation following physiological activation of the TLR7 and TLR8 pathways, leading to MAP3K14/CHUK-mediated activatory phosphorylation of IRF7. Also stimulates MAP3K14/CHUK-dependent NF-kappa-B signaling. Negatively regulates TNF-induced IL6 and IL8 expression, via the NF-kappa-B pathway. May act by interacting with RELA/p65 and trapping it in the cytoplasm. May also bind IFNB promoter; the function is independent of IRF3. Involved in both stress and inflammatory responses. Independently of its ATPase/helicase activity, required for efficient stress granule assembly through its interaction with EIF4E, hence promotes survival in stressed cells. Independently of its helicase activity, regulates NLRP3 inflammasome assembly through interaction with NLRP3 and hence promotes cell death by pyroptosis during inflammation. This function is independent of helicase activity. Therefore DDX3X availability may be used to interpret stress signals and choose between pro-survival stress granules and pyroptotic NLRP3 inflammasomes and serve as a live-or-die checkpoint in stressed cells. In association with GSK3A/B, negatively regulates extrinsic apoptotic signaling pathway via death domain receptors, including TNFRSF10B, slowing down the rate of CASP3 activation following death receptor stimulation. Cleavage by caspases may inactivate DDX3X and relieve the inhibition. Independently of its ATPase/helicase activity, allosteric activator of CSNK1E. Stimulates CSNK1E-mediated phosphorylation of DVL2, thereby involved in the positive regulation of Wnt/beta-catenin signaling pathway. Also activates CSNK1A1 and CSNK1D in vitro, but it is uncertain if these targets are physiologically relevant. ATPase and casein kinase-activating functions are mutually exclusive. May be involved in mitotic chromosome segregation. In Mus musculus (Mouse), this protein is ATP-dependent RNA helicase DDX3X (Ddx3x).